We begin with the raw amino-acid sequence, 135 residues long: T-cell receptor gamma chain V region 5/10-13 (135 aa).

An N-terminal signal peptide occupies residues 1–18; that stretch reads MLLLRWPTFCCLWVFGLG. A v segment region spans residues 19 to 114; it reads QLEQTELSVT…DEATYYCAVC (96 aa). The interval 115–135 is j segment; it reads RSGTSWVKIFAKGTKLVVIPP.

The protein is T-cell receptor gamma chain V region 5/10-13 (Tcrg-V1) of Mus musculus (Mouse).